We begin with the raw amino-acid sequence, 257 residues long: NAD-capped RNA hydrolase NudC (257 aa).

2 residues coordinate substrate: Lys-25 and Arg-69. Residues Cys-98 and Cys-101 each contribute to the Zn(2+) site. Glu-111 is a substrate binding site. 2 residues coordinate Zn(2+): Cys-116 and Cys-119. Residue Tyr-124 participates in substrate binding. The Nudix hydrolase domain maps to 125 to 248 (PQIAPCIIVA…TVARRLIEDT (124 aa)). Positions 158, 174, and 178 each coordinate a divalent metal cation. Positions 159-180 (GFVEVGETLEQAVAREVMEESG) match the Nudix box motif. 192–199 (QPWPFPQS) is a binding site for substrate. A divalent metal cation is bound at residue Glu-219. Position 241 (Ala-241) interacts with substrate.

This sequence belongs to the Nudix hydrolase family. NudC subfamily. In terms of assembly, homodimer. Requires Mg(2+) as cofactor. The cofactor is Mn(2+). It depends on Zn(2+) as a cofactor.

It catalyses the reaction a 5'-end NAD(+)-phospho-ribonucleoside in mRNA + H2O = a 5'-end phospho-adenosine-phospho-ribonucleoside in mRNA + beta-nicotinamide D-ribonucleotide + 2 H(+). The catalysed reaction is NAD(+) + H2O = beta-nicotinamide D-ribonucleotide + AMP + 2 H(+). The enzyme catalyses NADH + H2O = reduced beta-nicotinamide D-ribonucleotide + AMP + 2 H(+). Functionally, mRNA decapping enzyme that specifically removes the nicotinamide adenine dinucleotide (NAD) cap from a subset of mRNAs by hydrolyzing the diphosphate linkage to produce nicotinamide mononucleotide (NMN) and 5' monophosphate mRNA. The NAD-cap is present at the 5'-end of some mRNAs and stabilizes RNA against 5'-processing. Has preference for mRNAs with a 5'-end purine. Catalyzes the hydrolysis of a broad range of dinucleotide pyrophosphates. The protein is NAD-capped RNA hydrolase NudC of Escherichia fergusonii (strain ATCC 35469 / DSM 13698 / CCUG 18766 / IAM 14443 / JCM 21226 / LMG 7866 / NBRC 102419 / NCTC 12128 / CDC 0568-73).